The following is a 303-amino-acid chain: UDP-3-O-acyl-N-acetylglucosamine deacetylase (303 aa).

Zn(2+) contacts are provided by H78, H237, and D241. H264 (proton donor) is an active-site residue.

The protein belongs to the LpxC family. Requires Zn(2+) as cofactor.

The enzyme catalyses a UDP-3-O-[(3R)-3-hydroxyacyl]-N-acetyl-alpha-D-glucosamine + H2O = a UDP-3-O-[(3R)-3-hydroxyacyl]-alpha-D-glucosamine + acetate. The protein operates within glycolipid biosynthesis; lipid IV(A) biosynthesis; lipid IV(A) from (3R)-3-hydroxytetradecanoyl-[acyl-carrier-protein] and UDP-N-acetyl-alpha-D-glucosamine: step 2/6. Catalyzes the hydrolysis of UDP-3-O-myristoyl-N-acetylglucosamine to form UDP-3-O-myristoylglucosamine and acetate, the committed step in lipid A biosynthesis. The sequence is that of UDP-3-O-acyl-N-acetylglucosamine deacetylase from Pseudomonas putida (strain ATCC 700007 / DSM 6899 / JCM 31910 / BCRC 17059 / LMG 24140 / F1).